The sequence spans 428 residues: Adenylosuccinate synthetase (428 aa).

GTP-binding positions include 11–17 (GDEGKGK) and 39–41 (GHT). Aspartate 12 acts as the Proton acceptor in catalysis. Mg(2+) contacts are provided by aspartate 12 and glycine 39. IMP is bound by residues 12-15 (DEGK), 37-40 (NAGH), threonine 130, arginine 144, asparagine 226, threonine 241, and arginine 305. Histidine 40 (proton donor) is an active-site residue. Residue 301–307 (VTTGRKR) coordinates substrate. GTP contacts are provided by residues arginine 307, 333-335 (KLD), and 415-417 (GTG).

It belongs to the adenylosuccinate synthetase family. As to quaternary structure, homodimer. It depends on Mg(2+) as a cofactor.

The protein localises to the cytoplasm. It catalyses the reaction IMP + L-aspartate + GTP = N(6)-(1,2-dicarboxyethyl)-AMP + GDP + phosphate + 2 H(+). It participates in purine metabolism; AMP biosynthesis via de novo pathway; AMP from IMP: step 1/2. In terms of biological role, plays an important role in the de novo pathway and in the salvage pathway of purine nucleotide biosynthesis. Catalyzes the first committed step in the biosynthesis of AMP from IMP. The chain is Adenylosuccinate synthetase from Candida tropicalis (strain ATCC MYA-3404 / T1) (Yeast).